Consider the following 172-residue polypeptide: Signal peptidase complex catalytic subunit sec11 (172 aa).

Residues M1 to Q14 are Cytoplasmic-facing. Residues V15–A35 form a helical; Signal-anchor for type II membrane protein membrane-spanning segment. Residues S36–E172 are Lumenal-facing. Catalysis depends on charge relay system residues S49, H90, and D115. Residues V158–L169 form a C-terminal short (CTS) helix region.

Belongs to the peptidase S26B family. In terms of assembly, component of the signal peptidase complex (SPC) composed of a catalytic subunit SEC11 and three accessory subunits SPC1, SPC2 and SPC3. The complex induces a local thinning of the ER membrane which is used to measure the length of the signal peptide (SP) h-region of protein substrates. This ensures the selectivity of the complex towards h-regions shorter than 18-20 amino acids. SPC associates with the translocon complex.

The protein resides in the endoplasmic reticulum membrane. The catalysed reaction is Cleavage of hydrophobic, N-terminal signal or leader sequences from secreted and periplasmic proteins.. Catalytic component of the signal peptidase complex (SPC) which catalyzes the cleavage of N-terminal signal sequences from nascent proteins as they are translocated into the lumen of the endoplasmic reticulum. Specifically cleaves N-terminal signal peptides that contain a hydrophobic alpha-helix (h-region) shorter than 18-20 amino acids. The polypeptide is Signal peptidase complex catalytic subunit sec11 (sec11) (Sclerotinia sclerotiorum (strain ATCC 18683 / 1980 / Ss-1) (White mold)).